Here is a 486-residue protein sequence, read N- to C-terminus: Nucleolar protein 56 (486 aa).

One can recognise a Nop domain in the interval 298-416 (CAPSLSALIG…VEDRLEYFTS (119 aa)). The tract at residues 450-486 (KKAKRLAEESVTATAEAEVDEDAPKPKKKKKSKAGDE) is disordered. A compositionally biased stretch (basic residues) spans 475-486 (PKKKKKSKAGDE).

The protein belongs to the NOP5/NOP56 family.

It localises to the nucleus. Its subcellular location is the nucleolus. Functionally, required for 60S ribosomal subunit synthesis. The protein is Nucleolar protein 56 of Caenorhabditis elegans.